A 578-amino-acid chain; its full sequence is Proline--tRNA ligase (578 aa).

Belongs to the class-II aminoacyl-tRNA synthetase family. ProS type 1 subfamily. Homodimer.

It is found in the cytoplasm. The catalysed reaction is tRNA(Pro) + L-proline + ATP = L-prolyl-tRNA(Pro) + AMP + diphosphate. Catalyzes the attachment of proline to tRNA(Pro) in a two-step reaction: proline is first activated by ATP to form Pro-AMP and then transferred to the acceptor end of tRNA(Pro). As ProRS can inadvertently accommodate and process non-cognate amino acids such as alanine and cysteine, to avoid such errors it has two additional distinct editing activities against alanine. One activity is designated as 'pretransfer' editing and involves the tRNA(Pro)-independent hydrolysis of activated Ala-AMP. The other activity is designated 'posttransfer' editing and involves deacylation of mischarged Ala-tRNA(Pro). The misacylated Cys-tRNA(Pro) is not edited by ProRS. The chain is Proline--tRNA ligase from Burkholderia pseudomallei (strain 668).